The primary structure comprises 359 residues: GalNAc-alpha-(1-&gt;4)-GalNAc-alpha-(1-&gt;3)-diNAcBac-PP-undecaprenol alpha-1,4-N-acetyl-D-galactosaminyltransferase (359 aa).

Glu-17 contacts substrate. Tyr-45 is a binding site for UDP-N-acetyl-alpha-D-galactosamine. 71 to 74 (RFKK) serves as a coordination point for substrate. Residues His-117, Arg-190, Lys-195, Val-246, and 266–274 (EGLPTVLIE) each bind UDP-N-acetyl-alpha-D-galactosamine. Residue Arg-190 participates in substrate binding.

The protein belongs to the glycosyltransferase group 1 family.

The protein localises to the cell inner membrane. It carries out the reaction N-acetyl-alpha-D-galactosaminyl-(1-&gt;4)-N-acetyl-alpha-D-galactosaminyl-(1-&gt;3)-N,N'-diacetyl-alpha-D-bacillosaminyl-tri-trans,heptacis-undecaprenyl diphosphate + 3 UDP-N-acetyl-alpha-D-galactosamine = [alpha-D-GalNAc-(1-&gt;4)]4-alpha-D-GalNAc-(1-&gt;3)-alpha-D-diNAcBac-tri-trans,hepta-cis-undecaprenyl diphosphate + 3 UDP + 3 H(+). The protein operates within protein modification; protein glycosylation. Its function is as follows. Processive glycosyltransferase that is part of the biosynthetic pathway of the lipid-linked oligosaccharide (LLO) that serves as the glycan donor in bacterial protein N-glycosylation. Catalyzes the transfer of exactly three alpha-(1-&gt;4)-N-acetylgalactosamine (GalNAc) units to the growing LLO precursor, GalNAc-alpha-(1-&gt;4)-GalNAc-alpha-(1-&gt;3)-diNAcBac-PP-undecaprenyl. Cannot accept UDP-GlcNAc as substrate. This is GalNAc-alpha-(1-&gt;4)-GalNAc-alpha-(1-&gt;3)-diNAcBac-PP-undecaprenol alpha-1,4-N-acetyl-D-galactosaminyltransferase from Campylobacter jejuni subsp. jejuni serotype O:2 (strain ATCC 700819 / NCTC 11168).